Here is a 431-residue protein sequence, read N- to C-terminus: Adenylosuccinate synthetase (431 aa).

GTP contacts are provided by residues 13-19 (GDEGKGK) and 41-43 (GHT). The active-site Proton acceptor is D14. Positions 14 and 41 each coordinate Mg(2+). IMP contacts are provided by residues 14 to 17 (DEGK), 39 to 42 (NAGH), T130, R144, Q225, T240, and R304. H42 (proton donor) is an active-site residue. 300-306 (ATTGRAR) is a substrate binding site. Residues R306, 332-334 (KLD), and 415-417 (STG) contribute to the GTP site.

Belongs to the adenylosuccinate synthetase family. Homodimer. Mg(2+) is required as a cofactor.

The protein localises to the cytoplasm. It carries out the reaction IMP + L-aspartate + GTP = N(6)-(1,2-dicarboxyethyl)-AMP + GDP + phosphate + 2 H(+). Its pathway is purine metabolism; AMP biosynthesis via de novo pathway; AMP from IMP: step 1/2. Its function is as follows. Plays an important role in the de novo pathway of purine nucleotide biosynthesis. Catalyzes the first committed step in the biosynthesis of AMP from IMP. The sequence is that of Adenylosuccinate synthetase from Ectopseudomonas mendocina (strain ymp) (Pseudomonas mendocina).